Here is a 202-residue protein sequence, read N- to C-terminus: Small ribosomal subunit protein uS4c (202 aa).

The S4 RNA-binding domain occupies 90–153; the sequence is MRLDNIIFRL…KSQAIISKNL (64 aa).

This sequence belongs to the universal ribosomal protein uS4 family. As to quaternary structure, part of the 30S ribosomal subunit. Contacts protein S5. The interaction surface between S4 and S5 is involved in control of translational fidelity.

The protein localises to the plastid. It is found in the chloroplast. One of the primary rRNA binding proteins, it binds directly to 16S rRNA where it nucleates assembly of the body of the 30S subunit. Its function is as follows. With S5 and S12 plays an important role in translational accuracy. This Rosulabryum capillare (Capillary thread-moss) protein is Small ribosomal subunit protein uS4c (rps4).